The sequence spans 465 residues: Asparagine--tRNA ligase (465 aa).

The protein belongs to the class-II aminoacyl-tRNA synthetase family. As to quaternary structure, homodimer.

The protein localises to the cytoplasm. The catalysed reaction is tRNA(Asn) + L-asparagine + ATP = L-asparaginyl-tRNA(Asn) + AMP + diphosphate + H(+). In Hahella chejuensis (strain KCTC 2396), this protein is Asparagine--tRNA ligase.